The following is a 117-amino-acid chain: MISIILVMIGGGFGAITRSAITDYFNHKFTSKLPIATLIVNLVGSFLIGLNIGLSISISWFPAFFVTGFLGGLTTFSTLAKELTLMMTPKFNINLFLNYSLLQFIIGFIACYIGYHI.

The next 2 membrane-spanning stretches (helical) occupy residues 1-21 (MISI…RSAI) and 46-66 (FLIG…AFFV). Positions 71 and 74 each coordinate Na(+). Residues 95 to 115 (LFLNYSLLQFIIGFIACYIGY) traverse the membrane as a helical segment.

This sequence belongs to the fluoride channel Fluc/FEX (TC 1.A.43) family.

The protein resides in the cell membrane. The catalysed reaction is fluoride(in) = fluoride(out). With respect to regulation, na(+) is not transported, but it plays an essential structural role and its presence is essential for fluoride channel function. Functionally, fluoride-specific ion channel. Important for reducing fluoride concentration in the cell, thus reducing its toxicity. In Staphylococcus aureus (strain MSSA476), this protein is Fluoride-specific ion channel FluC 2.